We begin with the raw amino-acid sequence, 1374 residues long: MDKQPVLEPTFDSVSERENTSIEESSLLENNGFDHRNKDESLSVNTSPPLVCRKCFELGHQTENCKQKLTVNSENNSAQNEKEKVLPENPRARSNFISSLCFWYTIPIFRKGYRKTLDSTDLYRPLEEQKSDILGNRLCASWERELKNDGRSPSLVRALLRVFGWQLGFPGLAIFVVELGLRTLQPIFLVKLISYFSGEPDAANAGFYYAVAQIVISALTVMILTPTTFGIHHVCFKMRVAMGSMIFRKALRLTKGALGDTTSGHVVNLISNDIPRLDSAPYTVHYLWVGPLQVLVITYLMYQEIGISAVFGVLFMLLFMPIQMYLGTRTSAIQLKAAERTDNRIRMVNEIISAIQVLKMYAWEQPFEQMVTHAREKEMNTIRQGQYIRGFDFARRIVLSRVAIFLSLVGYVILGKVFTPEIAFMITAYYNVLLAAMSIYVPSAIIQTAQFLTSIRRVEQFMQSEELGSSDKSEGPSKDTVPGNPPSNNNEADLLKSAISIRDLKAKWDPNSPDYTLSGINLEIKPGSVVAVIGLTGSGKSSLIQAILGELKANSGQLQVNGSLSYTSQESWLFSGTVRQNILFGQPMDSQRYEEVVKKCALERDFDLLPLRDNTIVGERGATLSGGQKARISLARSVYRKASIYLLDDPLSAVDASVARHLFDQCVRGHLRGSTVVLVTHQEQFLPHVDQIVILANGQIKALGDYESLLKTGLITGLGSLSKTDKAKTEEQEPLNLNSPDNKNEVTPIKENSEQTVGGSSSGKEHVERQESGGISLALYRKYFQAGGGLVAFLVMLSSSVLAQVAVTGGDYFLTYWVKKESTAAGHGEMEDMESKSMDVYKYTLIIILSVIMNLSSSFLLFNIAKKASIRLHNTIFNRVTRADMHFFSINKHGSILNRFTKDMSQVDEVLPVVLVDVMQIALWLAGIIIVIANVNPLLLVPTLMLSVIFYHLRNLYLKTSRDLKRVEAINRSPVYSHLAASLNGLTTIRALDAQRVLEKEFDSYQDAHSSAFFMYISTSQAFGYCMNCICVIYISIITLSFFAFPPGNGADVGLVITQAMGLIDMVQWGVRQTAELENTMTAVERVVEYESIEPEGMLEAPDDKKPPKTWPEQGEIIFKELNLRYTPNAKAENVLKSLSFVIQPREKVGIVGRTGAGKSSLINALFRLSYTDGSVLIDTRDTRQMGLHDLRRQISIIPQEPVLFSGTMRYNLDPFDEYSDEKLWGCLEEVKLKEVVSDLPDGLASKISEGGTNFSVGQRQLVCLARAILRENRILVMDEATANVDPQTDGLIQATIRSKFRDCTVLTIAHRLHTIIDSDKVMVMDAGRVVEFGSPYELMTKSDSKVFHNLVNQSGRASYEGLLKIAQETFESS.

A disordered region spans residues 1 to 40; sequence MDKQPVLEPTFDSVSERENTSIEESSLLENNGFDHRNKDE. A run of 6 helical transmembrane segments spans residues 159–179, 205–225, 282–302, 305–325, 404–424, and 426–446; these read LLRVFGWQLGFPGLAIFVVEL, AGFYYAVAQIVISALTVMILT, YTVHYLWVGPLQVLVITYLMY, IGISAVFGVLFMLLFMPIQMY, IFLSLVGYVILGKVFTPEIAF, and ITAYYNVLLAAMSIYVPSAII. In terms of domain architecture, ABC transmembrane type-1 1 spans 168–449; sequence GFPGLAIFVV…YVPSAIIQTA (282 aa). The interval 466–492 is disordered; that stretch reads ELGSSDKSEGPSKDTVPGNPPSNNNEA. The ABC transporter 1 domain occupies 499–722; it reads ISIRDLKAKW…GLITGLGSLS (224 aa). 534-541 lines the ATP pocket; that stretch reads GLTGSGKS. N-linked (GlcNAc...) asparagine glycosylation occurs at Asn561. The interval 723-766 is disordered; the sequence is KTDKAKTEEQEPLNLNSPDNKNEVTPIKENSEQTVGGSSSGKEH. The next 5 helical transmembrane spans lie at 787-807, 845-865, 913-933, 938-958, and 1025-1045; these read GGGLVAFLVMLSSSVLAQVAV, LIIILSVIMNLSSSFLLFNIA, VVLVDVMQIALWLAGIIIVIA, LLLVPTLMLSVIFYHLRNLYL, and YCMNCICVIYISIITLSFFAF. Positions 793–1079 constitute an ABC transmembrane type-1 2 domain; that stretch reads FLVMLSSSVL…GVRQTAELEN (287 aa). One can recognise an ABC transporter 2 domain in the interval 1119 to 1352; that stretch reads FKELNLRYTP…SDSKVFHNLV (234 aa). Residue 1153–1160 coordinates ATP; sequence GRTGAGKS. Residues Asn1254 and Asn1353 are each glycosylated (N-linked (GlcNAc...) asparagine).

It belongs to the ABC transporter superfamily. ABCC family. Conjugate transporter (TC 3.A.1.208) subfamily. In terms of tissue distribution, uniform expression in embryos.

The protein resides in the membrane. Functionally, vital for development. The polypeptide is Probable multidrug resistance-associated protein lethal(2)03659 (l(2)03659) (Drosophila melanogaster (Fruit fly)).